A 107-amino-acid chain; its full sequence is Toluene 1,2-dioxygenase system ferredoxin subunit (107 aa).

One can recognise a Rieske domain in the interval 4–99 (TYILRQGDLP…IKVEGDEVHV (96 aa)). 4 residues coordinate [2Fe-2S] cluster: C43, H45, C62, and H65.

The protein belongs to the bacterial ring-hydroxylating dioxygenase ferredoxin component family. This dioxygenase system consists of four proteins: the two subunits of the hydroxylase component (todC1 and todC2), a ferredoxin (TodB) and a ferredoxin reductase (TodA).

Its pathway is xenobiotic degradation; toluene degradation. Functionally, this protein seems to be a 2Fe-2S ferredoxin. In Pseudomonas putida (strain ATCC 700007 / DSM 6899 / JCM 31910 / BCRC 17059 / LMG 24140 / F1), this protein is Toluene 1,2-dioxygenase system ferredoxin subunit (todB).